A 475-amino-acid polypeptide reads, in one-letter code: Bifunctional protein HldE (475 aa).

A ribokinase region spans residues 1 to 321; sequence MADKIDISLY…RALHQITASH (321 aa). 197-200 lines the ATP pocket; sequence NLKE. Aspartate 266 is a catalytic residue. A cytidylyltransferase region spans residues 346–475; sequence MTNGCFDILH…TSRLVEKMLN (130 aa).

It in the N-terminal section; belongs to the carbohydrate kinase PfkB family. The protein in the C-terminal section; belongs to the cytidylyltransferase family. Homodimer.

It catalyses the reaction D-glycero-beta-D-manno-heptose 7-phosphate + ATP = D-glycero-beta-D-manno-heptose 1,7-bisphosphate + ADP + H(+). The enzyme catalyses D-glycero-beta-D-manno-heptose 1-phosphate + ATP + H(+) = ADP-D-glycero-beta-D-manno-heptose + diphosphate. It functions in the pathway nucleotide-sugar biosynthesis; ADP-L-glycero-beta-D-manno-heptose biosynthesis; ADP-L-glycero-beta-D-manno-heptose from D-glycero-beta-D-manno-heptose 7-phosphate: step 1/4. Its pathway is nucleotide-sugar biosynthesis; ADP-L-glycero-beta-D-manno-heptose biosynthesis; ADP-L-glycero-beta-D-manno-heptose from D-glycero-beta-D-manno-heptose 7-phosphate: step 3/4. Catalyzes the phosphorylation of D-glycero-D-manno-heptose 7-phosphate at the C-1 position to selectively form D-glycero-beta-D-manno-heptose-1,7-bisphosphate. Its function is as follows. Catalyzes the ADP transfer from ATP to D-glycero-beta-D-manno-heptose 1-phosphate, yielding ADP-D-glycero-beta-D-manno-heptose. The protein is Bifunctional protein HldE of Coxiella burnetii (strain Dugway 5J108-111).